Reading from the N-terminus, the 152-residue chain is Xanthine-guanine phosphoribosyltransferase (152 aa).

Residues 37 to 38 and 88 to 96 each bind 5-phospho-alpha-D-ribose 1-diphosphate; these read RG and DDLVDTGNT. Asp89 is a binding site for Mg(2+). Guanine is bound by residues Asp92 and Ile135. Asp92 and Ile135 together coordinate xanthine. Residues 92-96 and 134-135 each bind GMP; these read DTGNT and WI.

This sequence belongs to the purine/pyrimidine phosphoribosyltransferase family. XGPT subfamily. As to quaternary structure, homotetramer. Mg(2+) is required as a cofactor.

It localises to the cell inner membrane. It catalyses the reaction GMP + diphosphate = guanine + 5-phospho-alpha-D-ribose 1-diphosphate. The catalysed reaction is XMP + diphosphate = xanthine + 5-phospho-alpha-D-ribose 1-diphosphate. It carries out the reaction IMP + diphosphate = hypoxanthine + 5-phospho-alpha-D-ribose 1-diphosphate. It functions in the pathway purine metabolism; GMP biosynthesis via salvage pathway; GMP from guanine: step 1/1. It participates in purine metabolism; XMP biosynthesis via salvage pathway; XMP from xanthine: step 1/1. Its function is as follows. Purine salvage pathway enzyme that catalyzes the transfer of the ribosyl-5-phosphate group from 5-phospho-alpha-D-ribose 1-diphosphate (PRPP) to the N9 position of the 6-oxopurines guanine and xanthine to form the corresponding ribonucleotides GMP (guanosine 5'-monophosphate) and XMP (xanthosine 5'-monophosphate), with the release of PPi. To a lesser extent, also acts on hypoxanthine. The chain is Xanthine-guanine phosphoribosyltransferase from Actinobacillus succinogenes (strain ATCC 55618 / DSM 22257 / CCUG 43843 / 130Z).